The chain runs to 337 residues: GTPase Obg (337 aa).

The 159-residue stretch at 1-159 (MDFIDEVKLY…RNIVLKLKVL (159 aa)) folds into the Obg domain. Residues 160 to 329 (SDVGIIGMPN…LNEKVKTKEI (170 aa)) enclose the OBG-type G domain. Residues 166 to 173 (GMPNVGKS), 191 to 195 (FTTIR), 212 to 215 (DIPG), 279 to 282 (NKCD), and 310 to 312 (DDD) contribute to the GTP site. Mg(2+) contacts are provided by serine 173 and threonine 193.

Belongs to the TRAFAC class OBG-HflX-like GTPase superfamily. OBG GTPase family. In terms of assembly, monomer. The cofactor is Mg(2+).

Its subcellular location is the cytoplasm. Its function is as follows. An essential GTPase which binds GTP, GDP and possibly (p)ppGpp with moderate affinity, with high nucleotide exchange rates and a fairly low GTP hydrolysis rate. Plays a role in control of the cell cycle, stress response, ribosome biogenesis and in those bacteria that undergo differentiation, in morphogenesis control. The sequence is that of GTPase Obg from Wolbachia pipientis subsp. Culex pipiens (strain wPip).